Consider the following 757-residue polypeptide: MDVNPTLLFLKVPAQNAISTTFPYTGDPPYSHGTGTGYTMDTVNRTHQYSEKGKWTTNTETGAPQLNPIDGPLPEDNEPSGYAQTDCVLEAMAFLEESHPGIFENSCLETMEVVQQTRVDKLTQGRQTYDWTLNRNQPAATALANTIEVFRSNGLTANESGRLIDFLKDVMESMDKEEIEITTHFQRKRRVRDNMTKKMVTQRTIGKKKQRVNKRSYLIRALTLNTMTKDAERGKLKRRAIATPGMQIRGFVYFVETLARSICEKLEQSGLPVGGNEKKAKLANVVRKMMTNSQDTELSFTITGDNTKWNENQNPRMFLAMITYITKNQPEWFRNILSIAPIMFSNKMARLGKGYMFESKRMKLRTQIPAEMLASIDLKYFNESTRKKIEKIRPLLIDGTASLSPGMMMGMFNMLSTVLGVSILNLGQKKYTKTTYWWDGLQSSDDFALIVNAPNHEGIQAGVDRFYRTCKLVGINMSKKKSYINKTGTFEFTSFFYRYGFVANFSMELPSFGVSGINESADMSIGVTVIKNNMINNDLGPATAQMALQLFIKDYRYTYRCHRGDTQIQTRRSFELKKLWEQTQSKAGLLVSDGGPNLYNIRNLHIPEVCLKWELMDEDYQGRLCNPLNPFVSHKEIESVNNAVVMPAHGPAKSMEYDAVATTHSWIPKRNRSILNTSQRGILEDEQMYQKCCNLFEKFFPSSSYRRPVGISSMVEAMVSRARIDARIDFESGRIKKEEFSEIMKICSTIEELRRQK.

A disordered region spans residues 50–82 (SEKGKWTTNTETGAPQLNPIDGPLPEDNEPSGY). The segment covering 55–64 (WTTNTETGAP) has biased composition (polar residues). Short sequence motifs (nuclear localization signal) lie at residues 187 to 195 (RKRRVRDNM) and 203 to 216 (RTIGKKKQRVNKRS). The promoter-binding site stretch occupies residues 249-256 (RGFVYFVE). The RdRp catalytic domain occupies 286-483 (VRKMMTNSQD…GINMSKKKSY (198 aa)).

Belongs to the influenza viruses polymerase PB1 family. As to quaternary structure, influenza RNA polymerase is composed of three subunits: PB1, PB2 and PA. Interacts (via N-terminus) with PA (via C-terminus). Interacts (via C-terminus) with PB2 (via N-terminus); this interaction is essential for transcription initiation. Phosphorylated by host PRKCA.

It is found in the host nucleus. Its subcellular location is the host cytoplasm. It catalyses the reaction RNA(n) + a ribonucleoside 5'-triphosphate = RNA(n+1) + diphosphate. Functionally, RNA-dependent RNA polymerase which is responsible for replication and transcription of virus RNA segments. The transcription of viral mRNAs occurs by a unique mechanism called cap-snatching. 5' methylated caps of cellular mRNAs are cleaved after 10-13 nucleotides by PA. In turn, these short capped RNAs are used as primers by PB1 for transcription of viral mRNAs. During virus replication, PB1 initiates RNA synthesis and copy vRNA into complementary RNA (cRNA) which in turn serves as a template for the production of more vRNAs. This Aves (whales) protein is RNA-directed RNA polymerase catalytic subunit.